A 966-amino-acid chain; its full sequence is Glycine dehydrogenase (decarboxylating) (966 aa).

An N6-(pyridoxal phosphate)lysine modification is found at lysine 713.

It belongs to the GcvP family. In terms of assembly, the glycine cleavage system is composed of four proteins: P, T, L and H. The cofactor is pyridoxal 5'-phosphate.

The catalysed reaction is N(6)-[(R)-lipoyl]-L-lysyl-[glycine-cleavage complex H protein] + glycine + H(+) = N(6)-[(R)-S(8)-aminomethyldihydrolipoyl]-L-lysyl-[glycine-cleavage complex H protein] + CO2. In terms of biological role, the glycine cleavage system catalyzes the degradation of glycine. The P protein binds the alpha-amino group of glycine through its pyridoxal phosphate cofactor; CO(2) is released and the remaining methylamine moiety is then transferred to the lipoamide cofactor of the H protein. This is Glycine dehydrogenase (decarboxylating) from Shewanella halifaxensis (strain HAW-EB4).